Here is a 197-residue protein sequence, read N- to C-terminus: HTH-type transcriptional repressor BdcR (197 aa).

One can recognise an HTH tetR-type domain in the interval 15-75; it reads RFAPEQAISA…RVLNEYVGTE (61 aa). A DNA-binding region (H-T-H motif) is located at residues 38–57; the sequence is SVAEVTDYLGINPPSLYAAF.

Its function is as follows. Negatively regulates expression of bdcA. The protein is HTH-type transcriptional repressor BdcR (bdcR) of Escherichia coli (strain K12).